We begin with the raw amino-acid sequence, 176 residues long: ATP synthase subunit b, chloroplastic (176 aa).

Residues 27–49 (ILNLAAVFALLAYVGTDFVSSLL) form a helical membrane-spanning segment.

It belongs to the ATPase B chain family. As to quaternary structure, F-type ATPases have 2 components, F(1) - the catalytic core - and F(0) - the membrane proton channel. F(1) has five subunits: alpha(3), beta(3), gamma(1), delta(1), epsilon(1). F(0) has four main subunits: a(1), b(1), b'(1) and c(10-14). The alpha and beta chains form an alternating ring which encloses part of the gamma chain. F(1) is attached to F(0) by a central stalk formed by the gamma and epsilon chains, while a peripheral stalk is formed by the delta, b and b' chains.

The protein localises to the plastid. It is found in the chloroplast thylakoid membrane. Functionally, f(1)F(0) ATP synthase produces ATP from ADP in the presence of a proton or sodium gradient. F-type ATPases consist of two structural domains, F(1) containing the extramembraneous catalytic core and F(0) containing the membrane proton channel, linked together by a central stalk and a peripheral stalk. During catalysis, ATP synthesis in the catalytic domain of F(1) is coupled via a rotary mechanism of the central stalk subunits to proton translocation. In terms of biological role, component of the F(0) channel, it forms part of the peripheral stalk, linking F(1) to F(0). This is ATP synthase subunit b, chloroplastic from Nephroselmis olivacea (Green alga).